Here is a 364-residue protein sequence, read N- to C-terminus: tRNA-specific 2-thiouridylase MnmA (364 aa).

ATP-binding positions include 12 to 19 and Met38; that span reads GMSGGVDS. An interaction with target base in tRNA region spans residues 98-100; the sequence is NPD. Cys103 acts as the Nucleophile in catalysis. Cys103 and Cys199 form a disulfide bridge. Gly127 contacts ATP. The segment at 149–151 is interaction with tRNA; it reads KDQ. Residue Cys199 is the Cysteine persulfide intermediate of the active site. The interaction with tRNA stretch occupies residues 307–308; that stretch reads RY.

The protein belongs to the MnmA/TRMU family.

The protein localises to the cytoplasm. The catalysed reaction is S-sulfanyl-L-cysteinyl-[protein] + uridine(34) in tRNA + AH2 + ATP = 2-thiouridine(34) in tRNA + L-cysteinyl-[protein] + A + AMP + diphosphate + H(+). Catalyzes the 2-thiolation of uridine at the wobble position (U34) of tRNA, leading to the formation of s(2)U34. The chain is tRNA-specific 2-thiouridylase MnmA from Shouchella clausii (strain KSM-K16) (Alkalihalobacillus clausii).